A 498-amino-acid polypeptide reads, in one-letter code: Probable global transactivator (498 aa).

One can recognise a Helicase ATP-binding domain in the interval 43 to 206 (RERRGRPHGG…YAIIHFLRCR (164 aa)). 55–63 (ADDMGLGKT) lines the ATP pocket. The DEAH box signature appears at 157 to 160 (DEAH). In terms of domain architecture, Helicase C-terminal spans 337–493 (ELVQRVLDTP…RTALNYEDIK (157 aa)).

It belongs to the SNF2/RAD54 helicase family.

In Orgyia pseudotsugata (Douglas-fir tussock moth), this protein is Probable global transactivator (GTA).